Here is a 519-residue protein sequence, read N- to C-terminus: MANLGSEAEREPLLGPGSPGSREWSEIETQEHYKSRWKSVRILYLTMFLSSVGFSIVIMSIWPYLQKIDQTADASFLGWVIASYSLGQMVASPLFGLWSNYRPRKEPLIVSISISVAANCLYAYVHVPAAHNKYYMLIARGLVGFGAGNVAVVRSYIAGATSLQERTNAMANTSTCQALGFILGPVFQTCFALIGEKGVTWDIIKLQVNMYTAPVLLAAFLGILNIILILFILREHRVDDLGRQCKSVNFQEENTDEPQIPEGSIDQVAVVATNIVFFVVLFIFAVYETILTPLTLDMYAWTQEQAVLYDGILLVAFGVEAVLVFMGVKLLSKKIGERAILLGGFVVVWVGFFILLPWGNQFPKIQWEDLHNSSTPNTTFGEIIIGLWNSSREDHSEQPTGCPIEQTWCLYTPVIHLAQFLTAAVLIGTGYPACSVMSYTLYSKVLGPKPQGIYMGWLTTSGSAARILGPVFISHVYTYLGPRWAFSLVCGIVVLTILLIGAVYKRLVAFSVRYMRIQE.

The segment at 1-25 (MANLGSEAEREPLLGPGSPGSREWS) is disordered. Residues 1–41 (MANLGSEAEREPLLGPGSPGSREWSEIETQEHYKSRWKSVR) lie on the Cytoplasmic side of the membrane. Positions 13–14 (LL) match the Dileucine internalization motif motif. A helical transmembrane segment spans residues 42–62 (ILYLTMFLSSVGFSIVIMSIW). The Extracellular portion of the chain corresponds to 63 to 75 (PYLQKIDQTADAS). Residues 76 to 96 (FLGWVIASYSLGQMVASPLFG) traverse the membrane as a helical segment. The Cytoplasmic portion of the chain corresponds to 97–106 (LWSNYRPRKE). Residues 107-127 (PLIVSISISVAANCLYAYVHV) traverse the membrane as a helical segment. At 128–140 (PAAHNKYYMLIAR) the chain is on the extracellular side. A helical transmembrane segment spans residues 141–161 (GLVGFGAGNVAVVRSYIAGAT). The Cytoplasmic portion of the chain corresponds to 162 to 174 (SLQERTNAMANTS). A helical membrane pass occupies residues 175–195 (TCQALGFILGPVFQTCFALIG). The Extracellular portion of the chain corresponds to 196 to 212 (EKGVTWDIIKLQVNMYT). The chain crosses the membrane as a helical span at residues 213 to 233 (APVLLAAFLGILNIILILFIL). Residues 234–267 (REHRVDDLGRQCKSVNFQEENTDEPQIPEGSIDQ) lie on the Cytoplasmic side of the membrane. Residues 268-288 (VAVVATNIVFFVVLFIFAVYE) traverse the membrane as a helical segment. Residues 289–310 (TILTPLTLDMYAWTQEQAVLYD) are Extracellular-facing. A helical membrane pass occupies residues 311 to 331 (GILLVAFGVEAVLVFMGVKLL). Topologically, residues 332–338 (SKKIGER) are cytoplasmic. Residues 339 to 359 (AILLGGFVVVWVGFFILLPWG) traverse the membrane as a helical segment. Over 360-416 (NQFPKIQWEDLHNSSTPNTTFGEIIIGLWNSSREDHSEQPTGCPIEQTWCLYTPVIH) the chain is Extracellular. N-linked (GlcNAc...) asparagine glycans are attached at residues Asn372 and Asn377. Residues 417–439 (LAQFLTAAVLIGTGYPACSVMSY) form a helical membrane-spanning segment. Topologically, residues 440 to 452 (TLYSKVLGPKPQG) are cytoplasmic. Residues 453–473 (IYMGWLTTSGSAARILGPVFI) traverse the membrane as a helical segment. Residues 474–483 (SHVYTYLGPR) are Extracellular-facing. Residues 484-504 (WAFSLVCGIVVLTILLIGAVY) form a helical membrane-spanning segment. The Cytoplasmic segment spans residues 505 to 519 (KRLVAFSVRYMRIQE).

The protein belongs to the major facilitator superfamily.

It localises to the endosome membrane. It is found in the lysosome membrane. It carries out the reaction chloride(in) = chloride(out). The catalysed reaction is iodide(out) = iodide(in). The enzyme catalyses fluoride(in) = fluoride(out). Functionally, outward-rectifying chloride channel involved in endolysosomal chloride homeostasis, membrane fusion and function. Conducts chloride currents up to hundreds of picoamperes. Regulates lysosomal calcium content by reducing the lysosomal membrane potential, thereby activating TRPML1 channel and further release of lysosomal calcium ions. Regulates the pH in endolysosomal compartments and may contribute to progressive acidification from endosome to lysosome. Permeable to other halides such as iodide and fluoride ions. This chain is Major facilitator superfamily domain-containing protein 8, found in Mus musculus (Mouse).